We begin with the raw amino-acid sequence, 653 residues long: Protein SCARECROW (653 aa).

Disordered regions lie at residues 1-69 (MAES…RRVS) and 193-265 (PSSS…AVQT). Positions 17-31 (PLRTTSSGSSSSNNR) are enriched in low complexity. A compositionally biased stretch (pro residues) spans 32 to 41 (GPPPPPPPPL). Polar residues predominate over residues 51–63 (EMSSNPDYNNSSR). The span at 209–230 (QISNNPSPPQQQQQHQQQQQQH) shows a compositional bias: low complexity. Positions 246-265 (STDAPPQPETVTATVPAVQT) are enriched in polar residues. The region spanning 281-650 (QKQDEEGLHL…LSLLTASAWT (370 aa)) is the GRAS domain. The interval 288–351 (LHLLTLLLQC…LLNSCLGIYA (64 aa)) is leucine repeat I (LRI). Residues 295 to 299 (LQCAE) carry the LxCxE motif motif. The interval 370–435 (FQVFNGISPL…GGPPHVRLTG (66 aa)) is VHIID. The VHIID motif lies at 401–405 (VHIID). Positions 445–477 (ATGKRLSDFADKLGLPFEFCPLAEKVGNLDTER) are leucine repeat II (LRII). The segment at 486–573 (VAVHWLQHSL…QQLLSKEIRN (88 aa)) is PFYRE. The segment at 576-650 (AVGGPSRSGE…LSLLTASAWT (75 aa)) is SAW.

The protein belongs to the GRAS family. In terms of assembly, interacts with SHR, JKD and MGP. Interacts with SIEL. Interacts with RBR1 through its the LxCxE motif. In terms of tissue distribution, expressed in siliques, leaves and roots. Detected in the initial daughter cell before its asymmetric division and remains expressed only in the endodermal cell layer after the division. Expressed in the endodermis or starch sheath of the seedling hypocotyl, in the leaf bundle sheath cells and the root quiescent center.

Its subcellular location is the nucleus. Its function is as follows. Transcription factor required for quiescent center cells specification and maintenance of surrounding stem cells, and for the asymmetric cell division involved in radial pattern formation in roots. Essential for cell division but not differentiation of the ground tissue. Also required for normal shoot gravitropism. Regulates the radial organization of the shoot axial organs. Binds to the promoter of MGP, NUC, RLK and SCL3. Restricts SHR movment and sequesters it into the nucleus of the endodermis. This is Protein SCARECROW from Arabidopsis thaliana (Mouse-ear cress).